Reading from the N-terminus, the 96-residue chain is Small ribosomal subunit protein bS21 (96 aa).

The tract at residues 52–96 is disordered; that stretch reads RRARKQARKTAIREGLIAAPKPKARPVSPRRPAAPAPASSPVGAA. Low complexity predominate over residues 69-96; it reads AAPKPKARPVSPRRPAAPAPASSPVGAA.

Belongs to the bacterial ribosomal protein bS21 family.

This Methylobacterium nodulans (strain LMG 21967 / CNCM I-2342 / ORS 2060) protein is Small ribosomal subunit protein bS21.